The following is a 198-amino-acid chain: Recombination protein RecR (198 aa).

Residues 56-71 (CKICHSLTENEICDIC) form a C4-type zinc finger. Residues 79 to 174 (HLLCVVESPA…HMTRIAQGVP (96 aa)) form the Toprim domain.

Belongs to the RecR family.

In terms of biological role, may play a role in DNA repair. It seems to be involved in an RecBC-independent recombinational process of DNA repair. It may act with RecF and RecO. This is Recombination protein RecR from Acinetobacter baylyi (strain ATCC 33305 / BD413 / ADP1).